A 104-amino-acid polypeptide reads, in one-letter code: uncharacterized protein (104 aa).

An N-terminal signal peptide occupies residues 1–25 (MVSSFFMASTLLAISSCFNSSISRA). The chain crosses the membrane as a helical span at residues 79 to 99 (IPVVIVVEISSTLVLLLSAFL).

The protein localises to the membrane. This is an uncharacterized protein from Saccharomyces cerevisiae (strain ATCC 204508 / S288c) (Baker's yeast).